A 243-amino-acid polypeptide reads, in one-letter code: UPF0758 protein Ava_0172 (243 aa).

The MPN domain occupies 113–235 (PIDSPVAAVA…HQSLREVTTL (123 aa)). 3 residues coordinate Zn(2+): histidine 184, histidine 186, and aspartate 197. The JAMM motif signature appears at 184–197 (HNHPSGNVEPSPED).

Belongs to the UPF0758 family.

This Trichormus variabilis (strain ATCC 29413 / PCC 7937) (Anabaena variabilis) protein is UPF0758 protein Ava_0172.